A 131-amino-acid polypeptide reads, in one-letter code: Major pollen allergen Pla l 1 (131 aa).

3 cysteine pairs are disulfide-bonded: C17–C86, C20–C131, and C42–C74. Zn(2+)-binding residues include H21, D45, D73, and E88. An N-linked (GlcNAc...) asparagine glycan is attached at N107.

This sequence belongs to the Ole e I family. Post-translationally, exists in two variants: glycosylated and non-glycosylated. Carries a complex, major N-linked glycan, with a alpha-1,3-fucose residue in its structure and probably also a beta-1,2-xylose. The average modification of molecular mass due to glycosylation is approximately 969 Da.

It is found in the secreted. This Plantago lanceolata (English plantain) protein is Major pollen allergen Pla l 1.